We begin with the raw amino-acid sequence, 431 residues long: Dihydroorotase (431 aa).

Positions 55 and 57 each coordinate Zn(2+). Residues 57-59 (HFR) and Asn-89 each bind substrate. Residues Lys-139, His-169, His-223, and Asp-290 each contribute to the Zn(2+) site. An N6-carboxylysine modification is found at Lys-139. The active site involves Asp-290. Substrate is bound by residues His-294 and 308–309 (PG).

The protein belongs to the metallo-dependent hydrolases superfamily. DHOase family. Class I DHOase subfamily. Requires Zn(2+) as cofactor.

It carries out the reaction (S)-dihydroorotate + H2O = N-carbamoyl-L-aspartate + H(+). It participates in pyrimidine metabolism; UMP biosynthesis via de novo pathway; (S)-dihydroorotate from bicarbonate: step 3/3. Its function is as follows. Catalyzes the reversible cyclization of carbamoyl aspartate to dihydroorotate. This Methanothermobacter thermautotrophicus (strain ATCC 29096 / DSM 1053 / JCM 10044 / NBRC 100330 / Delta H) (Methanobacterium thermoautotrophicum) protein is Dihydroorotase.